We begin with the raw amino-acid sequence, 131 residues long: Holo-[acyl-carrier-protein] synthase (131 aa).

The Mg(2+) site is built by D8 and E63.

It belongs to the P-Pant transferase superfamily. AcpS family. The cofactor is Mg(2+).

It localises to the cytoplasm. The catalysed reaction is apo-[ACP] + CoA = holo-[ACP] + adenosine 3',5'-bisphosphate + H(+). Its function is as follows. Transfers the 4'-phosphopantetheine moiety from coenzyme A to a Ser of acyl-carrier-protein. In Shewanella pealeana (strain ATCC 700345 / ANG-SQ1), this protein is Holo-[acyl-carrier-protein] synthase.